Reading from the N-terminus, the 546-residue chain is ATP synthase F(1) complex catalytic subunit beta, mitochondrial (546 aa).

A mitochondrion-targeting transit peptide spans 1–45 (MLGFVGRVAATSASGALRGLGPSPLPQVKVLLRASPAALQSARDY). N6-acetyllysine; alternate is present on residues K123, K132, and K160. Residues K123, K132, and K160 each carry the N6-succinyllysine; alternate modification. Residue K197 is modified to N6-acetyllysine. Positions 208, 209, 210, 211, 212, and 213 each coordinate ADP. G208 contributes to the ATP binding site. Residues G208, V209, G210, K211, and T212 each contribute to the phosphate site. The ATP site is built by G210, K211, T212, and V213. Residue T212 participates in Mg(2+) binding. E237 lines the Mg(2+) pocket. Residue R238 coordinates ATP. N6-acetyllysine; alternate occurs at positions 258 and 263. Residues K258 and K263 each carry the N6-succinyllysine; alternate modification. T311 is subject to Phosphothreonine. K425 carries the N6-acetyllysine modification. At S432 the chain carries Phosphoserine. An N6-acetyllysine mark is found at K479 and K484. K521 carries the post-translational modification N6-acetyllysine; alternate. K521 bears the N6-succinyllysine; alternate mark. The disordered stretch occupies residues 521–546 (KLAEEHSATQTSPSPKGAAAXXXRVV).

It belongs to the ATPase alpha/beta chains family. As to quaternary structure, homotrimer. Component of the ATP synthase complex composed at least of ATP5F1A/subunit alpha, ATP5F1B/subunit beta, ATP5MC1/subunit c (homooctomer), MT-ATP6/subunit a, MT-ATP8/subunit 8, ATP5ME/subunit e, ATP5MF/subunit f, ATP5MG/subunit g, ATP5MK/subunit k, ATP5MJ/subunit j, ATP5F1C/subunit gamma, ATP5F1D/subunit delta, ATP5F1E/subunit epsilon, ATP5PF/subunit F6, ATP5PB/subunit b, ATP5PD/subunit d, ATP5PO/subunit OSCP. ATP synthase complex consists of a soluble F(1) head domain (subunits alpha(3) and beta(3)) - the catalytic core - and a membrane F(0) domain - the membrane proton channel (subunits c, a, 8, e, f, g, k and j). These two domains are linked by a central stalk (subunits gamma, delta, and epsilon) rotating inside the F1 region and a stationary peripheral stalk (subunits F6, b, d, and OSCP). Interacts with PPIF. Interacts with BCL2L1 isoform BCL-X(L); the interaction mediates the association of BCL2L1 isoform BCL-X(L) with the mitochondrial membrane F(1)F(0) ATP synthase and enhances neurons metabolic efficiency. Interacts with CLN5 and PPT1. Interacts with S100A1; this interaction increases F1-ATPase activity. Interacts with MTLN. Interacts with TTC5/STRAP; the interaction results in decreased mitochondrial ATP production.

Its subcellular location is the mitochondrion inner membrane. It carries out the reaction ATP + H2O + 4 H(+)(in) = ADP + phosphate + 5 H(+)(out). Its function is as follows. Catalytic subunit beta, of the mitochondrial membrane ATP synthase complex (F(1)F(0) ATP synthase or Complex V) that produces ATP from ADP in the presence of a proton gradient across the membrane which is generated by electron transport complexes of the respiratory chain. ATP synthase complex consist of a soluble F(1) head domain - the catalytic core - and a membrane F(1) domain - the membrane proton channel. These two domains are linked by a central stalk rotating inside the F(1) region and a stationary peripheral stalk. During catalysis, ATP synthesis in the catalytic domain of F(1) is coupled via a rotary mechanism of the central stalk subunits to proton translocation. In vivo, can only synthesize ATP although its ATP hydrolase activity can be activated artificially in vitro. With the subunit alpha (ATP5F1A), forms the catalytic core in the F(1) domain. The polypeptide is ATP synthase F(1) complex catalytic subunit beta, mitochondrial (Canis lupus familiaris (Dog)).